Here is a 694-residue protein sequence, read N- to C-terminus: Elongation factor G (694 aa).

Residues 8 to 282 (KDYRNIGIMA…AVIDYLPSPV (275 aa)) form the tr-type G domain. GTP contacts are provided by residues 17 to 24 (AHIDAGKT), 81 to 85 (DTPGH), and 135 to 138 (NKMD).

Belongs to the TRAFAC class translation factor GTPase superfamily. Classic translation factor GTPase family. EF-G/EF-2 subfamily.

It localises to the cytoplasm. Its function is as follows. Catalyzes the GTP-dependent ribosomal translocation step during translation elongation. During this step, the ribosome changes from the pre-translocational (PRE) to the post-translocational (POST) state as the newly formed A-site-bound peptidyl-tRNA and P-site-bound deacylated tRNA move to the P and E sites, respectively. Catalyzes the coordinated movement of the two tRNA molecules, the mRNA and conformational changes in the ribosome. The chain is Elongation factor G from Mesomycoplasma hyopneumoniae (strain J / ATCC 25934 / NCTC 10110) (Mycoplasma hyopneumoniae).